Here is a 939-residue protein sequence, read N- to C-terminus: Isoleucine--tRNA ligase (939 aa).

The 'HIGH' region motif lies at 57 to 67 (PYANGHIHLGH). Glutamate 561 is an L-isoleucyl-5'-AMP binding site. The 'KMSKS' region signature appears at 602 to 606 (KMSKS). Position 605 (lysine 605) interacts with ATP. Residues cysteine 903, cysteine 906, cysteine 923, and cysteine 926 each contribute to the Zn(2+) site.

The protein belongs to the class-I aminoacyl-tRNA synthetase family. IleS type 1 subfamily. Monomer. The cofactor is Zn(2+).

It is found in the cytoplasm. The catalysed reaction is tRNA(Ile) + L-isoleucine + ATP = L-isoleucyl-tRNA(Ile) + AMP + diphosphate. Functionally, catalyzes the attachment of isoleucine to tRNA(Ile). As IleRS can inadvertently accommodate and process structurally similar amino acids such as valine, to avoid such errors it has two additional distinct tRNA(Ile)-dependent editing activities. One activity is designated as 'pretransfer' editing and involves the hydrolysis of activated Val-AMP. The other activity is designated 'posttransfer' editing and involves deacylation of mischarged Val-tRNA(Ile). In Desulfotalea psychrophila (strain LSv54 / DSM 12343), this protein is Isoleucine--tRNA ligase.